The primary structure comprises 138 residues: Aspartate 1-decarboxylase (138 aa).

The active-site Schiff-base intermediate with substrate; via pyruvic acid is S25. S25 carries the pyruvic acid (Ser) modification. T57 contributes to the substrate binding site. Y58 acts as the Proton donor in catalysis. 73 to 75 lines the substrate pocket; sequence GAA. The interval 117 to 138 is disordered; it reads VDADPTAPPAPGLERSPLAEPV.

It belongs to the PanD family. As to quaternary structure, heterooctamer of four alpha and four beta subunits. Requires pyruvate as cofactor. Post-translationally, is synthesized initially as an inactive proenzyme, which is activated by self-cleavage at a specific serine bond to produce a beta-subunit with a hydroxyl group at its C-terminus and an alpha-subunit with a pyruvoyl group at its N-terminus.

It localises to the cytoplasm. It catalyses the reaction L-aspartate + H(+) = beta-alanine + CO2. It participates in cofactor biosynthesis; (R)-pantothenate biosynthesis; beta-alanine from L-aspartate: step 1/1. Its function is as follows. Catalyzes the pyruvoyl-dependent decarboxylation of aspartate to produce beta-alanine. The sequence is that of Aspartate 1-decarboxylase from Clavibacter michiganensis subsp. michiganensis (strain NCPPB 382).